Consider the following 115-residue polypeptide: NADH-ubiquinone oxidoreductase chain 3 (115 aa).

A run of 3 helical transmembrane segments spans residues 3 to 23 (FALI…ITFW), 55 to 75 (FFLV…LLPL), and 84 to 104 (LPLM…SLAY).

It belongs to the complex I subunit 3 family. As to quaternary structure, core subunit of respiratory chain NADH dehydrogenase (Complex I) which is composed of 45 different subunits. Interacts with TMEM186. Interacts with TMEM242.

It localises to the mitochondrion inner membrane. The enzyme catalyses a ubiquinone + NADH + 5 H(+)(in) = a ubiquinol + NAD(+) + 4 H(+)(out). In terms of biological role, core subunit of the mitochondrial membrane respiratory chain NADH dehydrogenase (Complex I) which catalyzes electron transfer from NADH through the respiratory chain, using ubiquinone as an electron acceptor. Essential for the catalytic activity of complex I. The polypeptide is NADH-ubiquinone oxidoreductase chain 3 (Homo sapiens (Human)).